Consider the following 256-residue polypeptide: 5-keto-4-deoxy-D-glucarate aldolase (256 aa).

The active-site Proton acceptor is the His-50. Residue Gln-151 participates in substrate binding. Mg(2+) is bound at residue Glu-153. Residues Ser-178 and Asp-179 each coordinate substrate. Residue Asp-179 participates in Mg(2+) binding.

The protein belongs to the HpcH/HpaI aldolase family. KDGluc aldolase subfamily. In terms of assembly, homohexamer; trimer of dimers. The cofactor is Mg(2+).

It catalyses the reaction 5-dehydro-4-deoxy-D-glucarate = 2-hydroxy-3-oxopropanoate + pyruvate. The enzyme catalyses 2-dehydro-3-deoxy-D-glucarate = 2-hydroxy-3-oxopropanoate + pyruvate. Its pathway is carbohydrate acid metabolism; galactarate degradation; D-glycerate from galactarate: step 2/3. Its function is as follows. Catalyzes the reversible retro-aldol cleavage of both 5-keto-4-deoxy-D-glucarate and 2-keto-3-deoxy-D-glucarate to pyruvate and tartronic semialdehyde. This is 5-keto-4-deoxy-D-glucarate aldolase from Shigella dysenteriae serotype 1 (strain Sd197).